Reading from the N-terminus, the 449-residue chain is Probable phosphoglucosamine mutase (449 aa).

Catalysis depends on Ser96, which acts as the Phosphoserine intermediate. Mg(2+) contacts are provided by Ser96, Asp233, Asp235, and Asp237. Ser96 carries the post-translational modification Phosphoserine.

Belongs to the phosphohexose mutase family. The cofactor is Mg(2+). Post-translationally, activated by phosphorylation.

It carries out the reaction alpha-D-glucosamine 1-phosphate = D-glucosamine 6-phosphate. Catalyzes the conversion of glucosamine-6-phosphate to glucosamine-1-phosphate. Does not display phosphoglucomutase (PGM) or phosphomannomutase (PMM) activities. In Thermococcus kodakarensis (strain ATCC BAA-918 / JCM 12380 / KOD1) (Pyrococcus kodakaraensis (strain KOD1)), this protein is Probable phosphoglucosamine mutase (glmM).